Here is a 305-residue protein sequence, read N- to C-terminus: Transcription factor bHLH18 (305 aa).

Residues Leu-41 to Ser-67 form a disordered region. Polar residues predominate over residues Thr-44–Ser-56. One can recognise a bHLH domain in the interval Ser-122–Leu-171. Residues Asp-201 to Pro-224 form a disordered region. The segment covering Ser-207–Asn-222 has biased composition (low complexity).

As to quaternary structure, homodimer. Expressed in roots.

It is found in the nucleus. The chain is Transcription factor bHLH18 (BHLH18) from Arabidopsis thaliana (Mouse-ear cress).